The primary structure comprises 418 residues: Centromere protein U (418 aa).

Over residues 1 to 11 (MAPRGRRRPRP) the composition is skewed to basic residues. The interval 1–76 (MAPRGRRRPR…TYETFDPPLH (76 aa)) is disordered. Positions 6–23 (RRRPRPHRSEGARRSKNT) match the Nuclear localization signal motif. The span at 12 to 42 (HRSEGARRSKNTLERTHSMKDKAGQKCKPID) shows a compositional bias: basic and acidic residues. Thr-78 bears the Phosphothreonine; by PLK1 mark. The interval 88-227 (SKHCGLSLSS…KRKKSRSKAI (140 aa)) is disordered. Thr-98 carries the phosphothreonine modification. The residue at position 108 (Ser-108) is a Phosphoserine. Thr-110 is subject to Phosphothreonine. A phosphoserine mark is found at Ser-111, Ser-116, and Ser-120. The span at 124 to 133 (SAKKPGRKLR) shows a compositional bias: basic residues. Phosphoserine is present on residues Ser-136, Ser-139, and Ser-141. Residues 145 to 165 (SDTRRKVKSAEKISTQRHEVI) show a composition bias toward basic and acidic residues. A compositionally biased stretch (polar residues) spans 180–193 (SVTSKKTGPLSAQP). Lys-185 participates in a covalent cross-link: Glycyl lysine isopeptide (Lys-Gly) (interchain with G-Cter in SUMO2). Residues Ser-190 and Ser-194 each carry the phosphoserine modification. The segment covering 208-224 (TQKKGKISHDKRKKSRS) has biased composition (basic residues). Ser-232 carries the phosphoserine modification. Coiled coils occupy residues 297-356 (QMLT…NAAY) and 397-417 (LLGA…LLDQ). A Nuclear localization signal motif is present at residues 303–320 (KRKNAKMISDIEKKRQRM).

It belongs to the CENP-U/AME1 family. Component of the CENPA-NAC complex, at least composed of CENPA, CENPC, CENPH, CENPM, CENPN, CENPT and CENPU. The CENPA-NAC complex interacts with the CENPA-CAD complex, composed of CENPI, CENPK, CENPL, CENPO, CENPP, CENPQ, CENPR and CENPS. Interacts with MLF1. Interacts with PLK1. In terms of assembly, (Microbial infection) Interacts with the N-terminal domain of Kaposi's sarcoma-associated herpesvirus latent nuclear antigen (LNA). Post-translationally, phosphorylated by PLK1 at Thr-78, creating a self-tethering site that specifically interacts with the polo-box domain of PLK1. In terms of tissue distribution, expressed at high levels in the testis, fetal liver, thymus, bone marrow and at lower levels in the lymph nodes, placenta, colon and spleen. Present in all cell lines examined, including B-cells, T-cells, epithelial cells and fibroblast cells. Expressed at high levels in glioblastoma cell lines.

The protein localises to the cytoplasm. It localises to the nucleus. The protein resides in the chromosome. It is found in the centromere. Its subcellular location is the kinetochore. Its function is as follows. Component of the CENPA-NAC (nucleosome-associated) complex, a complex that plays a central role in assembly of kinetochore proteins, mitotic progression and chromosome segregation. The CENPA-NAC complex recruits the CENPA-CAD (nucleosome distal) complex and may be involved in incorporation of newly synthesized CENPA into centromeres. Plays an important role in the correct PLK1 localization to the mitotic kinetochores. A scaffold protein responsible for the initial recruitment and maintenance of the kinetochore PLK1 population until its degradation. Involved in transcriptional repression. The polypeptide is Centromere protein U (CENPU) (Homo sapiens (Human)).